The chain runs to 197 residues: NADH-quinone oxidoreductase subunit C (197 aa).

Belongs to the complex I 30 kDa subunit family. As to quaternary structure, NDH-1 is composed of 14 different subunits. Subunits NuoB, C, D, E, F, and G constitute the peripheral sector of the complex.

The protein resides in the cell inner membrane. The catalysed reaction is a quinone + NADH + 5 H(+)(in) = a quinol + NAD(+) + 4 H(+)(out). Its function is as follows. NDH-1 shuttles electrons from NADH, via FMN and iron-sulfur (Fe-S) centers, to quinones in the respiratory chain. The immediate electron acceptor for the enzyme in this species is believed to be ubiquinone. Couples the redox reaction to proton translocation (for every two electrons transferred, four hydrogen ions are translocated across the cytoplasmic membrane), and thus conserves the redox energy in a proton gradient. The polypeptide is NADH-quinone oxidoreductase subunit C (Neisseria meningitidis serogroup B (strain ATCC BAA-335 / MC58)).